Reading from the N-terminus, the 872-residue chain is Serine/threonine-protein phosphatase 1 regulatory subunit 10 (872 aa).

An interaction with TOX4 region spans residues methionine 1–aspartate 348. Residues lysine 73 to glutamine 147 enclose the TFIIS N-terminal domain. Disordered regions lie at residues glutamine 147–leucine 213, serine 247–proline 270, lysine 307–threonine 398, and valine 534–aspartate 837. 2 stretches are compositionally biased toward basic and acidic residues: residues alanine 153–serine 166 and proline 174–lysine 196. Lysine 179 is covalently cross-linked (Glycyl lysine isopeptide (Lys-Gly) (interchain with G-Cter in SUMO2)). The segment covering alanine 248–proline 258 has biased composition (low complexity). Residue lysine 262 forms a Glycyl lysine isopeptide (Lys-Gly) (interchain with G-Cter in SUMO2) linkage. A Phosphoserine modification is found at serine 313. Over residues lysine 325–serine 336 the composition is skewed to low complexity. The necessary for interaction with PPP1CA stretch occupies residues proline 357 to alanine 433. Position 382 is a phosphoserine (serine 382). The interval glycine 393–arginine 408 is necessary for interaction with PPP1CC. Residues arginine 394–valine 423 carry the PP1-binding motif motif. The residue at position 398 (threonine 398) is a Phosphothreonine; by PKA. The interval threonine 418 to leucine 619 is interaction with WDR82. Over residues glycine 540–glycine 551 the composition is skewed to gly residues. 2 positions are modified to phosphoserine: serine 545 and serine 591. A compositionally biased stretch (polar residues) spans glutamate 583–histidine 595. Over residues proline 596–lysine 611 the composition is skewed to basic and acidic residues. Positions proline 644–histidine 655 are enriched in pro residues. Position 665 is an omega-N-methylarginine (arginine 665). Over residues arginine 674–glycine 690 the composition is skewed to low complexity. Omega-N-methylarginine is present on residues arginine 693 and arginine 737. Residues alanine 724–glycine 762 show a composition bias toward gly residues. Positions proline 795–glycine 835 are enriched in basic and acidic residues. The segment at methionine 838–valine 866 adopts a C3H1-type zinc-finger fold.

As to quaternary structure, component of the PNUTS-PP1 complex (also named PTW/PP1 complex), composed of PPP1R10/PNUTS, TOX4, WDR82, and PPP1CA (or PPP1CB or PPP1CC). In terms of processing, phosphorylated on Thr-398 by PKA within the region necessary for interaction with PPP1CA. Expressed in testis, brain and intestine (at protein level). Highly expressed in testis.

Its subcellular location is the nucleus. The protein resides in the chromosome. In terms of biological role, substrate-recognition component of the PNUTS-PP1 protein phosphatase complex, a protein phosphatase 1 (PP1) complex that promotes RNA polymerase II transcription pause-release, allowing transcription elongation. Promoter-proximal pausing by RNA polymerase II is a transcription halt following transcription initiation but prior to elongation, which acts as a checkpoint to control that transcripts are favorably configured for transcriptional elongation. The PNUTS-PP1 complex mediates the release of RNA polymerase II from promoter-proximal region of genes by catalyzing dephosphorylation of proteins involved in transcription, such as AFF4, CDK9, MEPCE, INTS12, NCBP1, POLR2M/GDOWN1 and SUPT6H. The PNUTS-PP1 complex also regulates RNA polymerase II transcription termination by mediating dephosphorylation of SUPT5H in termination zones downstream of poly(A) sites, thereby promoting deceleration of RNA polymerase II transcription. PNUTS-PP1 complex is also involved in the response to replication stress by mediating dephosphorylation of POLR2A at 'Ser-5' of the CTD, promoting RNA polymerase II degradation. The PNUTS-PP1 complex also plays a role in the control of chromatin structure and cell cycle progression during the transition from mitosis into interphase. PNUTS-PP1 complex mediates dephosphorylation of MYC, promoting MYC stability by preventing MYC ubiquitination by the SCF(FBXW7) complex. In addition to acts as a substrate-recognition component, PPP1R10/PNUTS also acts as a nuclear targeting subunit for the PNUTS-PP1 complex. In some context, PPP1R10/PNUTS also acts as an inhibitor of protein phosphatase 1 (PP1) activity by preventing access to substrates. This chain is Serine/threonine-protein phosphatase 1 regulatory subunit 10, found in Rattus norvegicus (Rat).